Reading from the N-terminus, the 248-residue chain is Probable septum site-determining protein MinC (248 aa).

Residues 94–125 (GMPPAMRGGQPAADFEAPAGEPQANPGAPEPQ) are disordered.

Belongs to the MinC family. In terms of assembly, interacts with MinD and FtsZ.

Functionally, cell division inhibitor that blocks the formation of polar Z ring septums. Rapidly oscillates between the poles of the cell to destabilize FtsZ filaments that have formed before they mature into polar Z rings. Prevents FtsZ polymerization. This chain is Probable septum site-determining protein MinC, found in Brucella abortus (strain S19).